Here is an 89-residue protein sequence, read N- to C-terminus: Small ribosomal subunit protein uS15 (89 aa).

Belongs to the universal ribosomal protein uS15 family. Part of the 30S ribosomal subunit. Forms a bridge to the 50S subunit in the 70S ribosome, contacting the 23S rRNA.

Its function is as follows. One of the primary rRNA binding proteins, it binds directly to 16S rRNA where it helps nucleate assembly of the platform of the 30S subunit by binding and bridging several RNA helices of the 16S rRNA. Forms an intersubunit bridge (bridge B4) with the 23S rRNA of the 50S subunit in the ribosome. The protein is Small ribosomal subunit protein uS15 of Bifidobacterium adolescentis (strain ATCC 15703 / DSM 20083 / NCTC 11814 / E194a).